A 114-amino-acid polypeptide reads, in one-letter code: MNIIDEINQEQMQSVLPAFGAGDTVAVHVKVKEGDRERVQIFEGICIARRNRGLHSAFTVRKISNGEGVERVFPSYSPLVTKVEVKRRGDVRRAKLYYLRDLSGKAARIKEKLG.

The protein belongs to the bacterial ribosomal protein bL19 family.

Functionally, this protein is located at the 30S-50S ribosomal subunit interface and may play a role in the structure and function of the aminoacyl-tRNA binding site. This chain is Large ribosomal subunit protein bL19, found in Acidithiobacillus ferrooxidans (strain ATCC 23270 / DSM 14882 / CIP 104768 / NCIMB 8455) (Ferrobacillus ferrooxidans (strain ATCC 23270)).